Reading from the N-terminus, the 239-residue chain is Serine protease SplF (239 aa).

An N-terminal signal peptide occupies residues 1-36; sequence MNKNIIIKSIAALTILTSVTGVGTTMVEGIQQTAKA. Residues histidine 75, aspartate 114, and serine 192 each act as charge relay system in the active site.

Belongs to the peptidase S1B family.

It is found in the secreted. The protein is Serine protease SplF (splF) of Staphylococcus aureus (strain Mu50 / ATCC 700699).